A 1268-amino-acid chain; its full sequence is Protein transport protein Sec24B (1268 aa).

Low complexity-rich tracts occupy residues 1 to 14 (MSAP…AASA) and 21 to 48 (GGAA…GPAQ). Disordered regions lie at residues 1 to 71 (MSAP…SGHY), 216 to 263 (APTV…LTWS), 303 to 345 (QNVQ…SVTQ), and 362 to 451 (NNQA…VVPQ). Ser2 carries the N-acetylserine modification. Ser55 bears the Phosphoserine mark. Residues 225–234 (NSFSGQNTAI) are compositionally biased toward polar residues. Composition is skewed to low complexity over residues 245-255 (SQQHHQQQSLS), 311-332 (SPVV…TPPT), and 365-375 (ASSAPTPLSST). At Thr329 the chain carries Phosphothreonine. Residues 376 to 389 (SDDEEEEEEDEEAG) show a composition bias toward acidic residues. Residues 426 to 450 (APDPAPEPDPASAPAPASAPAPVVP) are compositionally biased toward pro residues. The Zn(2+) site is built by Cys605, Cys608, Cys626, and Cys629. The segment at 605-629 (CRSCRTYINPFVSFIDQRRWKCNLC) is zinc finger-like. The Gelsolin-like repeat unit spans residues 1141–1213 (PQPPLQKLSA…TLSSERARSF (73 aa)). Ser1224 bears the Phosphoserine mark.

It belongs to the SEC23/SEC24 family. SEC24 subfamily. In terms of assembly, COPII is composed of at least five proteins: the Sec23/24 complex, the Sec13/31 complex and SAR1. Interacts with STING1; promoting STING1 translocation to COPII vesicles in a STEEP1-dependent manner. Interacts with RNF139. Interacts with TMED2 and TMED10. Interacts with CNIH4.

The protein resides in the cytoplasmic vesicle. The protein localises to the COPII-coated vesicle membrane. It localises to the endoplasmic reticulum membrane. Its subcellular location is the cytoplasm. It is found in the cytosol. Component of the coat protein complex II (COPII) which promotes the formation of transport vesicles from the endoplasmic reticulum (ER). The coat has two main functions, the physical deformation of the endoplasmic reticulum membrane into vesicles and the selection of cargo molecules for their transport to the Golgi complex. Plays a central role in cargo selection within the COPII complex and together with SEC24A may have a different specificity compared to SEC24C and SEC24D. May package preferentially cargos with cytoplasmic DxE or LxxLE motifs and may also recognize conformational epitopes. In Homo sapiens (Human), this protein is Protein transport protein Sec24B.